A 123-amino-acid polypeptide reads, in one-letter code: Large ribosomal subunit protein bL12 (123 aa).

Belongs to the bacterial ribosomal protein bL12 family. Homodimer. Part of the ribosomal stalk of the 50S ribosomal subunit. Forms a multimeric L10(L12)X complex, where L10 forms an elongated spine to which 2 to 4 L12 dimers bind in a sequential fashion. Binds GTP-bound translation factors.

In terms of biological role, forms part of the ribosomal stalk which helps the ribosome interact with GTP-bound translation factors. Is thus essential for accurate translation. The polypeptide is Large ribosomal subunit protein bL12 (Rhodopseudomonas palustris (strain BisB5)).